We begin with the raw amino-acid sequence, 629 residues long: Phosphatidylinositol-3,5-bisphosphate 3-phosphatase MTMR8 (629 aa).

Positions 126-500 constitute a Myotubularin phosphatase domain; that stretch reads GWKLIDLKVD…FSFQFWCGMY (375 aa). A 1,2-diacyl-sn-glycero-3-phospho-(1D-myo-inositol-3,5-bisphosphate) is bound by residues N250, N275, and I276. The a 1,2-diacyl-sn-glycero-3-phospho-(1D-myo-inositol-3-phosphate) site is built by N250, N275, and I276. Residue C338 is the Phosphocysteine intermediate of the active site. 8 residues coordinate a 1,2-diacyl-sn-glycero-3-phospho-(1D-myo-inositol-3,5-bisphosphate): S339, D340, G341, W342, D343, R344, K380, and R384. A 1,2-diacyl-sn-glycero-3-phospho-(1D-myo-inositol-3-phosphate) is bound by residues S339, D340, G341, W342, D343, and R344. 2 residues coordinate phosphate: S339 and D340. W342, D343, and R344 together coordinate phosphate. R384 is a binding site for a 1,2-diacyl-sn-glycero-3-phospho-(1D-myo-inositol-3-phosphate). Residues 517-543 are a coiled coil; it reads LLSCMNQKIKLEDNASELENKLPFLDG.

This sequence belongs to the protein-tyrosine phosphatase family. Non-receptor class myotubularin subfamily. As to quaternary structure, homodimer.

The protein resides in the nucleus envelope. The enzyme catalyses a 1,2-diacyl-sn-glycero-3-phospho-(1D-myo-inositol-3,5-bisphosphate) + H2O = a 1,2-diacyl-sn-glycero-3-phospho-(1D-myo-inositol-5-phosphate) + phosphate. It carries out the reaction a 1,2-diacyl-sn-glycero-3-phospho-(1D-myo-inositol-3-phosphate) + H2O = a 1,2-diacyl-sn-glycero-3-phospho-(1D-myo-inositol) + phosphate. The catalysed reaction is 1,2-dioctanoyl-sn-glycero-3-phospho-(1D-myo-inositol-3,5-bisphosphate) + H2O = 1,2-dioctanoyl-sn-glycero-3-phospho-(1D-myo-inositol-5-phosphate) + phosphate. Its function is as follows. Lipid phosphatase that specifically dephosphorylates the D-3 position of phosphatidylinositol 3-phosphate and phosphatidylinositol 3,5-bisphosphate, generating phosphatidylinositol and phosphatidylinositol 5-phosphate. The chain is Phosphatidylinositol-3,5-bisphosphate 3-phosphatase MTMR8 from Gallus gallus (Chicken).